Consider the following 495-residue polypeptide: UDP-N-acetylmuramoyl-L-alanyl-D-glutamate--2,6-diaminopimelate ligase (495 aa).

Ser29 is a binding site for UDP-N-acetyl-alpha-D-muramoyl-L-alanyl-D-glutamate. 111–117 (GTNGKTS) lines the ATP pocket. UDP-N-acetyl-alpha-D-muramoyl-L-alanyl-D-glutamate contacts are provided by residues 153–154 (TT), Ser180, Gln186, and Arg188. N6-carboxylysine is present on Lys220. Meso-2,6-diaminopimelate contacts are provided by residues Arg384, 408–411 (DNPR), Gly459, and Glu463. The Meso-diaminopimelate recognition motif motif lies at 408–411 (DNPR).

It belongs to the MurCDEF family. MurE subfamily. It depends on Mg(2+) as a cofactor. Post-translationally, carboxylation is probably crucial for Mg(2+) binding and, consequently, for the gamma-phosphate positioning of ATP.

It is found in the cytoplasm. It carries out the reaction UDP-N-acetyl-alpha-D-muramoyl-L-alanyl-D-glutamate + meso-2,6-diaminopimelate + ATP = UDP-N-acetyl-alpha-D-muramoyl-L-alanyl-gamma-D-glutamyl-meso-2,6-diaminopimelate + ADP + phosphate + H(+). Its pathway is cell wall biogenesis; peptidoglycan biosynthesis. Functionally, catalyzes the addition of meso-diaminopimelic acid to the nucleotide precursor UDP-N-acetylmuramoyl-L-alanyl-D-glutamate (UMAG) in the biosynthesis of bacterial cell-wall peptidoglycan. The chain is UDP-N-acetylmuramoyl-L-alanyl-D-glutamate--2,6-diaminopimelate ligase from Xylella fastidiosa (strain 9a5c).